We begin with the raw amino-acid sequence, 432 residues long: Metacaspase-1 (432 aa).

Composition is skewed to low complexity over residues 1 to 14 (MYPG…NNAG) and 29 to 59 (QQYG…SQQY). A disordered region spans residues 1–70 (MYPGSGRYTY…PPPGPPPMAY (70 aa)). Positions 60-70 (APPPGPPPMAY) are enriched in pro residues. Active-site residues include H220 and C276.

Belongs to the peptidase C14B family.

It localises to the cytoplasm. It is found in the nucleus. Mediates cell death (apoptosis) triggered by oxygen stress, salt stress or chronological aging. Regulated cell death can prevent a release of toxic cellular components, thus avoiding necrotic collapse of the colony, and can also provide nutrients for healthy cells. Therefore, regulated cell death in yeast colonies can be as important for their development as are apoptosis and related processes that occur within metazoa. The protein is Metacaspase-1 (MCA1) of Saccharomyces cerevisiae (strain YJM789) (Baker's yeast).